A 333-amino-acid polypeptide reads, in one-letter code: Peroxisome biogenesis protein 2 (333 aa).

At 1–38 (MTPSTPADDAWIRSYQRLLPESQSLLASRRSVIPVAIS) the chain is on the peroxisomal matrix side. A helical membrane pass occupies residues 39–65 (RVNQFDAARLDVEMSAMLKEQLVKVFT). The Cytoplasmic segment spans residues 66–71 (LMKPGM). The helical transmembrane segment at 72–97 (LFQYEPELDAFLEFLIWRFSIWVDKP) threads the bilayer. The Peroxisomal matrix segment spans residues 98–131 (TPGNALMNLRYRDERGVVAQHLGKVRTGLEGPGL). Residues 132-158 (TSPQKIWYCVASVGGQYLFSRLQSFSA) traverse the membrane as a helical segment. The Cytoplasmic segment spans residues 159–168 (FRRWGDSEQR). The chain crosses the membrane as a helical span at residues 169-199 (PLARRLWTLVQRIEGIYKAASFLNLLSFLYT). The Peroxisomal matrix segment spans residues 200-226 (GRYRNLIEKALKARLVYRSPHMNRSVS). A helical transmembrane segment spans residues 227–250 (FEYMNRQLVWNEFSEMLLLLLPLL). Topologically, residues 251–333 (NSSAVKNILS…IQREGVSSGK (83 aa)) are cytoplasmic. Zn(2+)-binding residues include Cys-277, Cys-280, Cys-293, His-295, Cys-298, Cys-301, Cys-314, and Cys-317. The RING-type zinc-finger motif lies at 277-318 (CPICQVDPAIPFIALPCQHRYCYYCIRTRCASAASFRCLRCN).

It belongs to the pex2/pex10/pex12 family. In terms of assembly, component of the PEX2-PEX10-PEX12 retrotranslocation channel. Interacts with DSK2a and DSK2b. Expressed in roots, stems, leaves, flowers, pollen, ovules, seeds and siliques.

It localises to the peroxisome membrane. It carries out the reaction [E2 ubiquitin-conjugating enzyme]-S-ubiquitinyl-L-cysteine + [acceptor protein]-L-cysteine = [E2 ubiquitin-conjugating enzyme]-L-cysteine + [acceptor protein]-S-ubiquitinyl-L-cysteine.. Its pathway is protein modification; protein ubiquitination. In terms of biological role, E3 ubiquitin-protein ligase component of a retrotranslocation channel required for peroxisome organization by mediating export of the PEX5 receptor from peroxisomes to the cytosol, thereby promoting PEX5 recycling. The retrotranslocation channel is composed of PEX2, PEX10 and PEX12; each subunit contributing transmembrane segments that coassemble into an open channel that specifically allows the passage of PEX5 through the peroxisomal membrane. PEX2 also regulates peroxisome organization by acting as a E3 ubiquitin-protein ligase. PEX2 ubiquitinates PEX5 during its passage through the retrotranslocation channel: catalyzes monoubiquitination of PEX5 at 'Cys-6', a modification that acts as a signal for PEX5 extraction into the cytosol. This Arabidopsis thaliana (Mouse-ear cress) protein is Peroxisome biogenesis protein 2 (PEX2).